The primary structure comprises 333 residues: Flap endonuclease 1 (333 aa).

The interval 1 to 99 is N-domain; it reads MGVALRDILA…ETNAERKKLR (99 aa). Residues Asp-28, Asp-81, Glu-153, Glu-155, Asp-174, Asp-176, and Asp-235 each coordinate Mg(2+). An I-domain region spans residues 117–256; the sequence is EAYRQARSAT…TALKIVKSGG (140 aa). The segment at 325-333 is interaction with PCNA; the sequence is GQKTLESFF.

The protein belongs to the XPG/RAD2 endonuclease family. FEN1 subfamily. As to quaternary structure, interacts with PCNA. PCNA stimulates the nuclease activity without altering cleavage specificity. Mg(2+) serves as cofactor.

Functionally, structure-specific nuclease with 5'-flap endonuclease and 5'-3' exonuclease activities involved in DNA replication and repair. During DNA replication, cleaves the 5'-overhanging flap structure that is generated by displacement synthesis when DNA polymerase encounters the 5'-end of a downstream Okazaki fragment. Binds the unpaired 3'-DNA end and kinks the DNA to facilitate 5' cleavage specificity. Cleaves one nucleotide into the double-stranded DNA from the junction in flap DNA, leaving a nick for ligation. Also involved in the base excision repair (BER) pathway. Acts as a genome stabilization factor that prevents flaps from equilibrating into structures that lead to duplications and deletions. Also possesses 5'-3' exonuclease activity on nicked or gapped double-stranded DNA. This chain is Flap endonuclease 1, found in Methanoregula boonei (strain DSM 21154 / JCM 14090 / 6A8).